A 91-amino-acid polypeptide reads, in one-letter code: UPF0250 protein PP_4802 (91 aa).

It belongs to the UPF0250 family.

The sequence is that of UPF0250 protein PP_4802 from Pseudomonas putida (strain ATCC 47054 / DSM 6125 / CFBP 8728 / NCIMB 11950 / KT2440).